We begin with the raw amino-acid sequence, 757 residues long: Probable ubiquitin carboxyl-terminal hydrolase MINDY-4 (757 aa).

Disordered regions lie at residues 152-173 (FVSSKRPPHKSKPMQTVPGETP) and 190-334 (SLDV…LPGG). Residues 190 to 201 (SLDVKRMGENSR) are compositionally biased toward basic and acidic residues. 2 positions are modified to phosphoserine: Ser219 and Ser223. The span at 232 to 242 (SSPSSSSTQPQ) shows a compositional bias: low complexity. The span at 254–277 (CTQQDILASSNSSPSRTSLGQLSE) shows a compositional bias: polar residues. Residue Ser289 is modified to Phosphoserine. Basic and acidic residues predominate over residues 299–310 (PPWDRARPRDPS). Residue Cys456 is the Nucleophile of the active site. The active-site Proton acceptor is the His677.

The protein belongs to the MINDY deubiquitinase family. FAM188 subfamily.

The enzyme catalyses Thiol-dependent hydrolysis of ester, thioester, amide, peptide and isopeptide bonds formed by the C-terminal Gly of ubiquitin (a 76-residue protein attached to proteins as an intracellular targeting signal).. Functionally, probable hydrolase that can remove 'Lys-48'-linked conjugated ubiquitin from proteins. This Homo sapiens (Human) protein is Probable ubiquitin carboxyl-terminal hydrolase MINDY-4.